We begin with the raw amino-acid sequence, 847 residues long: Histidine decarboxylase (847 aa).

Substrate is bound by residues Phe80 and His193. The residue at position 304 (Lys304) is an N6-(pyridoxal phosphate)lysine. Positions 575 to 605 are enriched in polar residues; it reads GNGATRTSTTNSYGHTTSAAQANSERQASIQ. 3 disordered regions span residues 575 to 662, 769 to 798, and 813 to 847; these read GNGA…RSSP, QSQSLGNNSSTESSSLSGGATPTPTPMSSL, and SQPMLSAHGIGEGQREQGSDSDATVCSTTSSMESL. The segment covering 606–616 has biased composition (acidic residues); it reads EDNEESPEETE. Low complexity-rich tracts occupy residues 634–657 and 769–787; these read SLSTPSRSCSSSSHSLIHSLTQSS and QSQSLGNNSSTESSSLSGG. The segment covering 832-847 has biased composition (polar residues); it reads DSDATVCSTTSSMESL.

It belongs to the group II decarboxylase family. In terms of assembly, homodimer. Pyridoxal 5'-phosphate is required as a cofactor. Localized primarily to the photoreceptors, in the eye.

It carries out the reaction L-histidine + H(+) = histamine + CO2. Required in photoreceptor transmitter synthesis. Catlayzes the conversion of L-histidine to histamine. The sequence is that of Histidine decarboxylase (Hdc) from Drosophila melanogaster (Fruit fly).